A 491-amino-acid chain; its full sequence is Cytochrome P450 2F3 (491 aa).

Cys-436 contacts heme.

It belongs to the cytochrome P450 family. It depends on heme as a cofactor. Lung specific.

The protein resides in the endoplasmic reticulum membrane. It is found in the microsome membrane. The enzyme catalyses an organic molecule + reduced [NADPH--hemoprotein reductase] + O2 = an alcohol + oxidized [NADPH--hemoprotein reductase] + H2O + H(+). Functionally, bioactivates 3-methylindole (3MI) by dehydrogenation to the putative electrophile 3-methylene-indolenine. Stereoselectively catalyzes the formation of the 1R,2S-oxide from naphthalene. Lack activity with other common P450 substrates including 7-ethoxycoumarin. This is Cytochrome P450 2F3 (CYP2F3) from Capra hircus (Goat).